The primary structure comprises 593 residues: MKDADDSEEVKEEQAKGTKKGRKSSEPAATENDDDKPTKNKFAGILSKFERSKKARELEKTRESTKDEDSTEPTTAEPVIAQGLEPLPQPEAAPEQDEMPTYSSLPPWLANPLRASAQERRKFADLGIDSSLLRVLEDNGYREAFAVQSTVIPLLLQGPTNHPGDLCISAATGSGKTLSYVLPLVTALKPLPAPRLRGLIVVPTRELVKQAREACELCAAGSGLRVASAVGNVAIKDEQRESLPGYVHRSEPNVDILICTPGRLVDHLRYTKGFTLKNLEWLVIDEADRLLNESFQEWVDVVMTSLDARKAPDAFGFSGNFLSGLGLPIQSKEPRKVVLSATMTRDVTKLNSLRLANPKLVVIGSDAAATEDESGGVAPSDEQFTLPPTLEEHTVSVGDGSQKPLYLLRLLLSHIKLETKILVFTKSSESASRLARLLALLEPSLSDRIGTIIKSNKSSASRKTLTAYRRGKISVIIATDRASRGLDLRSLTHVVNYDVPASITTYVHRVGRTARAGQKGSAWTLVAHREGKWFASQIAKGSDGKITRSTKVGKVQFKLDNMKEVKARYASALDLLEKEVKTGGTKASKPSAQ.

The span at 1-11 shows a compositional bias: acidic residues; sequence MKDADDSEEVK. The segment at 1–103 is disordered; it reads MKDADDSEEV…PEQDEMPTYS (103 aa). A compositionally biased stretch (basic and acidic residues) spans 48–68; sequence KFERSKKARELEKTRESTKDE. Positions 84 to 93 are enriched in low complexity; it reads LEPLPQPEAA. Residues 121-149 carry the Q motif motif; that stretch reads RKFADLGIDSSLLRVLEDNGYREAFAVQS. The Helicase ATP-binding domain occupies 157–361; the sequence is QGPTNHPGDL…SLRLANPKLV (205 aa). 170–177 is an ATP binding site; that stretch reads AATGSGKT. The short motif at 285-288 is the DEAD box element; that stretch reads DEAD. Residues 407–563 form the Helicase C-terminal domain; the sequence is LLRLLLSHIK…KVQFKLDNMK (157 aa).

It belongs to the DEAD box helicase family. DDX51/DBP6 subfamily. In terms of assembly, associated with pre-ribosomal particles.

It localises to the nucleus. The protein resides in the nucleolus. The enzyme catalyses ATP + H2O = ADP + phosphate + H(+). In terms of biological role, ATP-binding RNA helicase involved in the biogenesis of 60S ribosomal subunits and is required for the normal formation of 25S and 5.8S rRNAs. This Aspergillus niger (strain ATCC MYA-4892 / CBS 513.88 / FGSC A1513) protein is ATP-dependent RNA helicase dbp6 (dbp6).